Reading from the N-terminus, the 215-residue chain is Ribose-5-phosphate isomerase A (215 aa).

Substrate is bound by residues 26–29 (TGST), 79–82 (DGAD), and 92–95 (KGGG). The Proton acceptor role is filled by glutamate 101. A substrate-binding site is contributed by lysine 119.

It belongs to the ribose 5-phosphate isomerase family. As to quaternary structure, homodimer.

The catalysed reaction is aldehydo-D-ribose 5-phosphate = D-ribulose 5-phosphate. It functions in the pathway carbohydrate degradation; pentose phosphate pathway; D-ribose 5-phosphate from D-ribulose 5-phosphate (non-oxidative stage): step 1/1. Its function is as follows. Catalyzes the reversible conversion of ribose-5-phosphate to ribulose 5-phosphate. In Xanthomonas axonopodis pv. citri (strain 306), this protein is Ribose-5-phosphate isomerase A.